We begin with the raw amino-acid sequence, 264 residues long: MSKITSSTLLKYKQEGRKFTALTAYDASFAGAFDSEGVDVLLVGDSLGMVLQGHDDTLPVTTAEIAYHTRCVRRGIERALLIADMPFMSYATPEQAMINATELMQAGANMVKVEGGHWLLETVTKLTERGIPVCAHLGLTPQSVHVFGGFKVQGRDAENAQRILDEAKALEAAGAQLLVVECIPAPLATAITQALTIPVIGIGAGASTDGQILVMHDVLGISSGYIPRFSKNYLKQTGEIRSAVRAYIEEVAAGTFPSAEHTFS.

Mg(2+) is bound by residues Asp-45 and Asp-84. 3-methyl-2-oxobutanoate is bound by residues 45-46, Asp-84, and Lys-112; that span reads DS. Glu-114 is a binding site for Mg(2+). Residue Glu-181 is the Proton acceptor of the active site.

Belongs to the PanB family. As to quaternary structure, homodecamer; pentamer of dimers. Requires Mg(2+) as cofactor.

The protein resides in the cytoplasm. The catalysed reaction is 3-methyl-2-oxobutanoate + (6R)-5,10-methylene-5,6,7,8-tetrahydrofolate + H2O = 2-dehydropantoate + (6S)-5,6,7,8-tetrahydrofolate. It participates in cofactor biosynthesis; (R)-pantothenate biosynthesis; (R)-pantoate from 3-methyl-2-oxobutanoate: step 1/2. Catalyzes the reversible reaction in which hydroxymethyl group from 5,10-methylenetetrahydrofolate is transferred onto alpha-ketoisovalerate to form ketopantoate. The sequence is that of 3-methyl-2-oxobutanoate hydroxymethyltransferase from Shewanella putrefaciens (strain CN-32 / ATCC BAA-453).